Consider the following 348-residue polypeptide: Neutral peroxidase (348 aa).

The signal sequence occupies residues M1–A20. A propeptide spanning residues G21–S67 is cleaved from the precursor. Intrachain disulfides connect C71/C149, C102/C107, C156/C344, and C235/C256. The active-site Proton acceptor is the H100. Positions 101, 104, 106, and 108 each coordinate Ca(2+). N-linked (GlcNAc...) asparagine glycosylation is found at N114, N118, N173, N177, and N189. P198 lines the substrate pocket. N-linked (GlcNAc...) asparagine glycosylation occurs at N203. H228 contacts heme b. Residue T229 coordinates Ca(2+). Residues N247 and N261 are each glycosylated (N-linked (GlcNAc...) asparagine). Ca(2+) contacts are provided by D269, S271, and D276. An N-linked (GlcNAc...) asparagine glycan is attached at N300.

The protein belongs to the peroxidase family. Classical plant (class III) peroxidase subfamily. Requires Ca(2+) as cofactor. The cofactor is heme b. As to expression, highly expressed in suspension cultured cells. Weak expression also found in the stems of intact plants. No expression in leaf, tuberous root and non-tuberous root.

The protein localises to the secreted. The enzyme catalyses 2 a phenolic donor + H2O2 = 2 a phenolic radical donor + 2 H2O. In terms of biological role, removal of H(2)O(2), oxidation of toxic reductants, biosynthesis and degradation of lignin, suberization, auxin catabolism, response to environmental stresses such as wounding, pathogen attack and oxidative stress. These functions might be dependent on each isozyme/isoform in each plant tissue. May contribute to protection against cold-induced oxidative stress. The sequence is that of Neutral peroxidase from Ipomoea batatas (Sweet potato).